Reading from the N-terminus, the 792-residue chain is Ribonucleoside-diphosphate reductase large subunit (792 aa).

The 92-residue stretch at 1-92 (MHVIKRDGRQ…VSNLHKETKK (92 aa)) folds into the ATP-cone domain. ATP is bound by residues 5–6 (KR), 11–17 (ERVMFDK), T53, and D57. K17 carries the post-translational modification N6-acetyllysine. S202 and S217 together coordinate GDP. C218 and C444 are disulfide-bonded. DTTP-binding positions include 226–228 (DSI), K243, R256, and 263–264 (AG). The residue at position 376 (K376) is an N6-acetyllysine. N427 serves as a coordination point for GDP. N427 serves as the catalytic Proton acceptor. C429 functions as the Cysteine radical intermediate in the catalytic mechanism. Residues E431 and 604–607 (TAST) contribute to the GDP site. E431 functions as the Proton acceptor in the catalytic mechanism. T751 carries the post-translational modification Phosphothreonine.

It belongs to the ribonucleoside diphosphate reductase large chain family. In terms of assembly, heterodimer of a large and a small subunit. Interacts with RRM2B. Interacts with AHCYL1 which inhibits its activity.

It localises to the cytoplasm. The catalysed reaction is a 2'-deoxyribonucleoside 5'-diphosphate + [thioredoxin]-disulfide + H2O = a ribonucleoside 5'-diphosphate + [thioredoxin]-dithiol. With respect to regulation, under complex allosteric control mediated by deoxynucleoside triphosphates and ATP binding to separate specificity and activation sites on the M1 subunit. The type of nucleotide bound at the specificity site determines substrate preference. It seems probable that ATP makes the enzyme reduce CDP and UDP, dGTP favors ADP reduction and dTTP favors GDP reduction. Stimulated by ATP and inhibited by dATP binding to the activity site, the dATP inhibition is mediated by AHCYL1 which stabilizes dATP in the site. In terms of biological role, provides the precursors necessary for DNA synthesis. Catalyzes the biosynthesis of deoxyribonucleotides from the corresponding ribonucleotides. This chain is Ribonucleoside-diphosphate reductase large subunit (Rrm1), found in Mus musculus (Mouse).